Reading from the N-terminus, the 162-residue chain is 6,7-dimethyl-8-ribityllumazine synthase (162 aa).

5-amino-6-(D-ribitylamino)uracil is bound by residues F23, 61-63 (AYE), and 85-87 (AVI). 90–91 (DT) contributes to the (2S)-2-hydroxy-3-oxobutyl phosphate binding site. Residue H93 is the Proton donor of the active site. F118 contributes to the 5-amino-6-(D-ribitylamino)uracil binding site. R132 is a (2S)-2-hydroxy-3-oxobutyl phosphate binding site.

It belongs to the DMRL synthase family.

The catalysed reaction is (2S)-2-hydroxy-3-oxobutyl phosphate + 5-amino-6-(D-ribitylamino)uracil = 6,7-dimethyl-8-(1-D-ribityl)lumazine + phosphate + 2 H2O + H(+). The protein operates within cofactor biosynthesis; riboflavin biosynthesis; riboflavin from 2-hydroxy-3-oxobutyl phosphate and 5-amino-6-(D-ribitylamino)uracil: step 1/2. Its function is as follows. Catalyzes the formation of 6,7-dimethyl-8-ribityllumazine by condensation of 5-amino-6-(D-ribitylamino)uracil with 3,4-dihydroxy-2-butanone 4-phosphate. This is the penultimate step in the biosynthesis of riboflavin. In Synechococcus sp. (strain CC9902), this protein is 6,7-dimethyl-8-ribityllumazine synthase.